The primary structure comprises 311 residues: Putative ABC transporter ATP-binding protein MG467 (311 aa).

One can recognise an ABC transporter domain in the interval 84–310 (ITINKMWKNV…IVSNQLVRPL (227 aa)). Residue 122–129 (GSSGSGKT) coordinates ATP.

The protein belongs to the ABC transporter superfamily.

The chain is Putative ABC transporter ATP-binding protein MG467 from Mycoplasma genitalium (strain ATCC 33530 / DSM 19775 / NCTC 10195 / G37) (Mycoplasmoides genitalium).